The chain runs to 528 residues: Nucleoporin ASM4 (528 aa).

An FG 1 repeat occupies 2–3; it reads FG. The segment covering 23-50 has biased composition (low complexity); that stretch reads TTQMFQSQSQLQPQPQPQPQQQQQHLQF. Disordered regions lie at residues 23–64 and 88–144; these read TTQM…FGNS and IKNG…SMNA. 2 stretches are compositionally biased toward polar residues: residues 51 to 64 and 97 to 108; these read NGSSDASSLRFGNS and QHGQGNNPSWVN. The stretch at 61-62 is one FG 2 repeat; the sequence is FG. Basic residues predominate over residues 110 to 125; it reads PKKRFTPHTVIRRKTT. Residues 127–141 show a composition bias toward low complexity; the sequence is QNSSSDINQNDDSSS. FG repeat units lie at residues 195–196, 274–275, and 291–292; these read FG. In terms of domain architecture, RRM Nup35-type spans 265–394; the sequence is SSSLSAIIVF…IPYSKNAVEQ (130 aa). 2 positions are modified to phosphoserine: S458 and S464. The stretch at 490–510 forms a coiled coil; that stretch reads NLLRNLESKMRQQEAKYRNNE. The FG 6 repeat unit spans residues 523–524; the sequence is FG.

Component of the nuclear pore complex (NPC). NPC constitutes the exclusive means of nucleocytoplasmic transport. NPCs allow the passive diffusion of ions and small molecules and the active, nuclear transport receptor-mediated bidirectional transport of macromolecules such as proteins, RNAs, ribonucleoparticles (RNPs), and ribosomal subunits across the nuclear envelope. Due to its 8-fold rotational symmetry, all subunits are present with 8 copies or multiples thereof. ASM4 may form a subcomplex with NUP53, NDC1, and NUP170. Phosphorylated by CDC28.

It is found in the nucleus. The protein localises to the nuclear pore complex. The protein resides in the nucleus membrane. In terms of biological role, functions as a component of the nuclear pore complex (NPC). NPC components, collectively referred to as nucleoporins (NUPs), can play the role of both NPC structural components and of docking or interaction partners for transiently associated nuclear transport factors. Active directional transport is assured by both, a Phe-Gly (FG) repeat affinity gradient for these transport factors across the NPC and a transport cofactor concentration gradient across the nuclear envelope (GSP1 and GSP2 GTPases associated predominantly with GTP in the nucleus, with GDP in the cytoplasm). May have a mitosis control function. This chain is Nucleoporin ASM4 (ASM4), found in Saccharomyces cerevisiae (strain ATCC 204508 / S288c) (Baker's yeast).